The following is a 395-amino-acid chain: Chaperone protein DnaJ (395 aa).

The 66-residue stretch at 4–69 (DYYEVLGVGR…DKRRRYDQFG (66 aa)) folds into the J domain. A CR-type zinc finger spans residues 152 to 233 (GVEKTLKIKK…CHGEGIKQGE (82 aa)). Zn(2+) is bound by residues Cys-165, Cys-168, Cys-181, Cys-184, Cys-207, Cys-210, Cys-221, and Cys-224. CXXCXGXG motif repeat units lie at residues 165–172 (CDVCNGTG), 181–188 (CPTCQGTG), 207–214 (CPTCGGEG), and 221–228 (CTACHGEG).

This sequence belongs to the DnaJ family. In terms of assembly, homodimer. Requires Zn(2+) as cofactor.

It is found in the cytoplasm. Its function is as follows. Participates actively in the response to hyperosmotic and heat shock by preventing the aggregation of stress-denatured proteins and by disaggregating proteins, also in an autonomous, DnaK-independent fashion. Unfolded proteins bind initially to DnaJ; upon interaction with the DnaJ-bound protein, DnaK hydrolyzes its bound ATP, resulting in the formation of a stable complex. GrpE releases ADP from DnaK; ATP binding to DnaK triggers the release of the substrate protein, thus completing the reaction cycle. Several rounds of ATP-dependent interactions between DnaJ, DnaK and GrpE are required for fully efficient folding. Also involved, together with DnaK and GrpE, in the DNA replication of plasmids through activation of initiation proteins. In Prosthecochloris aestuarii (strain DSM 271 / SK 413), this protein is Chaperone protein DnaJ.